A 125-amino-acid polypeptide reads, in one-letter code: Large ribosomal subunit protein bL12 (125 aa).

This sequence belongs to the bacterial ribosomal protein bL12 family. As to quaternary structure, homodimer. Part of the ribosomal stalk of the 50S ribosomal subunit. Forms a multimeric L10(L12)X complex, where L10 forms an elongated spine to which 2 to 4 L12 dimers bind in a sequential fashion. Binds GTP-bound translation factors.

Forms part of the ribosomal stalk which helps the ribosome interact with GTP-bound translation factors. Is thus essential for accurate translation. This chain is Large ribosomal subunit protein bL12, found in Rickettsia canadensis (strain McKiel).